We begin with the raw amino-acid sequence, 344 residues long: Laforin, isoform 9 (344 aa).

4 disordered regions span residues 1 to 44, 58 to 134, 158 to 188, and 320 to 344; these read MHPK…PGPG, GGGA…PRGH, PAPGAERELRPAPPTGASASGRPRRPRRRAS, and SLKKTQNDPTNETSVFANPRQQCAT. The span at 77-88 shows a compositional bias: low complexity; it reads AARAGALGAARC. Residues 101 to 131 show a composition bias toward gly residues; sequence RGPGPAGAGPVARGGGAGGRGGGAGRGGAGP. Over residues 179–188 the composition is skewed to basic residues; that stretch reads RPRRPRRRAS.

In terms of assembly, interacts with isoform 1 and isoform 2.

Its subcellular location is the nucleus. This Homo sapiens (Human) protein is Laforin, isoform 9.